The following is a 440-amino-acid chain: Ribosomal protein uS12 methylthiotransferase RimO (440 aa).

In terms of domain architecture, MTTase N-terminal spans 7 to 117 (PKISFVSLGC…VLDAVHRALP (111 aa)). C16, C52, C81, C148, C152, and C155 together coordinate [4Fe-4S] cluster. Positions 134 to 370 (LTPRHYAYLK…MARQQKISAQ (237 aa)) constitute a Radical SAM core domain. One can recognise a TRAM domain in the interval 373–439 (KRKVGTRQQV…EYDLHGSVAG (67 aa)).

This sequence belongs to the methylthiotransferase family. RimO subfamily. It depends on [4Fe-4S] cluster as a cofactor.

It is found in the cytoplasm. It catalyses the reaction L-aspartate(89)-[ribosomal protein uS12]-hydrogen + (sulfur carrier)-SH + AH2 + 2 S-adenosyl-L-methionine = 3-methylsulfanyl-L-aspartate(89)-[ribosomal protein uS12]-hydrogen + (sulfur carrier)-H + 5'-deoxyadenosine + L-methionine + A + S-adenosyl-L-homocysteine + 2 H(+). Functionally, catalyzes the methylthiolation of an aspartic acid residue of ribosomal protein uS12. This chain is Ribosomal protein uS12 methylthiotransferase RimO, found in Afipia carboxidovorans (strain ATCC 49405 / DSM 1227 / KCTC 32145 / OM5) (Oligotropha carboxidovorans).